The primary structure comprises 284 residues: L-ribulose-5-phosphate 3-epimerase UlaE (284 aa).

It belongs to the L-ribulose-5-phosphate 3-epimerase family.

It carries out the reaction L-ribulose 5-phosphate = L-xylulose 5-phosphate. Its pathway is cofactor degradation; L-ascorbate degradation; D-xylulose 5-phosphate from L-ascorbate: step 3/4. In terms of biological role, catalyzes the isomerization of L-xylulose-5-phosphate to L-ribulose-5-phosphate. Is involved in the anaerobic L-ascorbate utilization. This chain is L-ribulose-5-phosphate 3-epimerase UlaE, found in Escherichia coli O157:H7 (strain EC4115 / EHEC).